The primary structure comprises 478 residues: tRNA modification GTPase MnmE (478 aa).

The (6S)-5-formyl-5,6,7,8-tetrahydrofolate site is built by Arg-36, Glu-94, and Lys-133. A TrmE-type G domain is found at Gly-230–Gly-402. Asn-240 lines the K(+) pocket. Residues Asn-240–Ser-245, Thr-259–Thr-265, and Asp-284–Gly-287 contribute to the GTP site. Residue Ser-244 coordinates Mg(2+). K(+)-binding residues include Thr-259, Val-261, and Thr-264. A Mg(2+)-binding site is contributed by Thr-265. Lys-478 serves as a coordination point for (6S)-5-formyl-5,6,7,8-tetrahydrofolate.

The protein belongs to the TRAFAC class TrmE-Era-EngA-EngB-Septin-like GTPase superfamily. TrmE GTPase family. As to quaternary structure, homodimer. Heterotetramer of two MnmE and two MnmG subunits. K(+) is required as a cofactor.

The protein localises to the cytoplasm. Exhibits a very high intrinsic GTPase hydrolysis rate. Involved in the addition of a carboxymethylaminomethyl (cmnm) group at the wobble position (U34) of certain tRNAs, forming tRNA-cmnm(5)s(2)U34. This chain is tRNA modification GTPase MnmE, found in Psychrobacter arcticus (strain DSM 17307 / VKM B-2377 / 273-4).